A 396-amino-acid polypeptide reads, in one-letter code: Tyrosine--tRNA ligase (396 aa).

A 'HIGH' region motif is present at residues 42 to 51 (PTAPDIHLGH). The 'KMSKS' region signature appears at 226 to 230 (KMSKS). K229 provides a ligand contact to ATP. One can recognise an S4 RNA-binding domain in the interval 334–395 (LPIANLLKEA…GKRKFAKIII (62 aa)).

The protein belongs to the class-I aminoacyl-tRNA synthetase family. TyrS type 2 subfamily. In terms of assembly, homodimer.

The protein localises to the cytoplasm. It carries out the reaction tRNA(Tyr) + L-tyrosine + ATP = L-tyrosyl-tRNA(Tyr) + AMP + diphosphate + H(+). Its function is as follows. Catalyzes the attachment of tyrosine to tRNA(Tyr) in a two-step reaction: tyrosine is first activated by ATP to form Tyr-AMP and then transferred to the acceptor end of tRNA(Tyr). This is Tyrosine--tRNA ligase from Francisella tularensis subsp. tularensis (strain SCHU S4 / Schu 4).